We begin with the raw amino-acid sequence, 141 residues long: Hemoglobin subunit alpha (141 aa).

The Globin domain maps to 1 to 141 (VLSANDKANV…VSTVLTSKYR (141 aa)). A Phosphoserine modification is found at Ser-3. 2 positions are modified to N6-succinyllysine: Lys-7 and Lys-11. Lys-16 bears the N6-acetyllysine; alternate mark. Lys-16 bears the N6-succinyllysine; alternate mark. Phosphotyrosine is present on Tyr-24. Ser-35 bears the Phosphoserine mark. N6-succinyllysine is present on Lys-40. Ser-49 is subject to Phosphoserine. His-58 serves as a coordination point for O2. His-87 is a heme b binding site. Ser-102 carries the post-translational modification Phosphoserine. Thr-108 is modified (phosphothreonine). Phosphoserine occurs at positions 124 and 131. Thr-134 and Thr-137 each carry phosphothreonine. A Phosphoserine modification is found at Ser-138.

The protein belongs to the globin family. In terms of assembly, heterotetramer of two alpha chains and two beta chains. Red blood cells.

Functionally, involved in oxygen transport from the lung to the various peripheral tissues. In terms of biological role, hemopressin acts as an antagonist peptide of the cannabinoid receptor CNR1. Hemopressin-binding efficiently blocks cannabinoid receptor CNR1 and subsequent signaling. In Suncus murinus (Asian house shrew), this protein is Hemoglobin subunit alpha (HBA).